The sequence spans 72 residues: Exodeoxyribonuclease 7 small subunit (72 aa).

Belongs to the XseB family. In terms of assembly, heterooligomer composed of large and small subunits.

The protein resides in the cytoplasm. It catalyses the reaction Exonucleolytic cleavage in either 5'- to 3'- or 3'- to 5'-direction to yield nucleoside 5'-phosphates.. Bidirectionally degrades single-stranded DNA into large acid-insoluble oligonucleotides, which are then degraded further into small acid-soluble oligonucleotides. The chain is Exodeoxyribonuclease 7 small subunit from Ruegeria pomeroyi (strain ATCC 700808 / DSM 15171 / DSS-3) (Silicibacter pomeroyi).